Reading from the N-terminus, the 2214-residue chain is Multifunctional protein URA2 (2214 aa).

A2 bears the N-acetylalanine mark. A GATase (Glutamine amidotransferase) region spans residues A2–F400. L-glutamine is bound by residues S64, G273, and G275. The 186-residue stretch at R228–T413 folds into the Glutamine amidotransferase type-1 domain. C302 serves as the catalytic Nucleophile; for GATase activity. L303, Q306, N344, G346, and F347 together coordinate L-glutamine. Catalysis depends on for GATase activity residues H386 and E388. Positions D401 to K440 are linker. Residues K440–H980 are CPSase A. The segment at K440–I1482 is CPSase (Carbamoyl phosphate synthase). ATP contacts are provided by R558, R598, G604, G605, K635, M637, E642, G668, I669, H670, Q711, and E725. ATP-grasp domains lie at S562–L754 and S1099–M1290. Residues Q711, E725, and N727 each contribute to the Mg(2+) site. 3 residues coordinate Mn(2+): Q711, E725, and N727. The CPSase B stretch occupies residues G981–I1482. Residues R1135, K1174, I1176, E1181, G1206, V1207, H1208, S1209, Q1249, and E1261 each coordinate ATP. The Mg(2+) site is built by Q1249, E1261, and N1263. Mn(2+) contacts are provided by Q1249, E1261, and N1263. The 153-residue stretch at F1356–P1508 folds into the MGS-like domain. Residues E1483–D1492 are linker. A defective DHOase domain region spans residues V1493–G1821. The interval E1822–R1909 is linker. K1853 participates in a covalent cross-link: Glycyl lysine isopeptide (Lys-Gly) (interchain with G-Cter in ubiquitin). The residue at position 1857 (S1857) is a Phosphoserine; by PKA. An ATCase (Aspartate transcarbamylase) region spans residues G1910–M2214. Carbamoyl phosphate contacts are provided by R1962 and T1963. An L-aspartate-binding site is contributed by K1990. R2011, H2039, and Q2042 together coordinate carbamoyl phosphate. Positions 2072 and 2134 each coordinate L-aspartate. The carbamoyl phosphate site is built by L2173 and P2174.

In the N-terminal section; belongs to the CarA family. It in the 2nd section; belongs to the CarB family. The protein in the 3rd section; belongs to the metallo-dependent hydrolases superfamily. DHOase family. CAD subfamily. This sequence in the C-terminal section; belongs to the aspartate/ornithine carbamoyltransferase superfamily. ATCase family. Mg(2+) serves as cofactor. Requires Mn(2+) as cofactor.

Its subcellular location is the cytoplasm. The catalysed reaction is hydrogencarbonate + L-glutamine + 2 ATP + H2O = carbamoyl phosphate + L-glutamate + 2 ADP + phosphate + 2 H(+). It carries out the reaction L-glutamine + H2O = L-glutamate + NH4(+). It catalyses the reaction hydrogencarbonate + NH4(+) + 2 ATP = carbamoyl phosphate + 2 ADP + phosphate + 2 H(+). The enzyme catalyses carbamoyl phosphate + L-aspartate = N-carbamoyl-L-aspartate + phosphate + H(+). It participates in pyrimidine metabolism; UMP biosynthesis via de novo pathway; (S)-dihydroorotate from bicarbonate: step 1/3. Its pathway is pyrimidine metabolism; UMP biosynthesis via de novo pathway; (S)-dihydroorotate from bicarbonate: step 2/3. With respect to regulation, both CPSase and ATCase activities are feedback inhibited by the end product UTP. In terms of biological role, multifunctional protein that encodes the first 2 enzymatic activities of the de novo pyrimidine pathway: carbamoylphosphate synthetase (CPSase; EC 6.3.5.5) and aspartate transcarbamylase (ATCase; EC 2.1.3.2). The CPSase-function is accomplished in 2 steps, by a glutamine-dependent amidotransferase activity (GATase) that binds and cleaves glutamine to produce ammonia, followed by an ammonium-dependent carbamoyl phosphate synthetase, which reacts with the ammonia, hydrogencarbonate and ATP to form carbamoyl phosphate. The endogenously produced carbamoyl phosphate is sequestered and channeled to the ATCase active site. ATCase then catalyzes the formation of carbamoyl-L-aspartate from L-aspartate and carbamoyl phosphate. This is Multifunctional protein URA2 (URA2) from Saccharomyces cerevisiae (strain ATCC 204508 / S288c) (Baker's yeast).